The chain runs to 441 residues: Xaa-Pro dipeptidase (441 aa).

Mn(2+) contacts are provided by aspartate 244, aspartate 255, histidine 336, glutamate 381, and glutamate 420.

The protein belongs to the peptidase M24B family. Bacterial-type prolidase subfamily. Mn(2+) is required as a cofactor.

It carries out the reaction Xaa-L-Pro dipeptide + H2O = an L-alpha-amino acid + L-proline. Its function is as follows. Splits dipeptides with a prolyl residue in the C-terminal position. In Xanthomonas axonopodis pv. citri (strain 306), this protein is Xaa-Pro dipeptidase.